A 243-amino-acid chain; its full sequence is Ribonuclease 3 (243 aa).

The RNase III domain occupies valine 10–glycine 146. Glutamate 59 contacts Mg(2+). Aspartate 63 is a catalytic residue. Mg(2+) contacts are provided by aspartate 132 and glutamate 135. Residue glutamate 135 is part of the active site. One can recognise a DRBM domain in the interval aspartate 172–glutamine 241. Positions glycine 219–alanine 231 are enriched in basic and acidic residues. A disordered region spans residues glycine 219–lysine 243.

It belongs to the ribonuclease III family. Homodimer. Mg(2+) is required as a cofactor.

The protein resides in the cytoplasm. The catalysed reaction is Endonucleolytic cleavage to 5'-phosphomonoester.. Its function is as follows. Digests double-stranded RNA. Involved in the processing of primary rRNA transcript to yield the immediate precursors to the large and small rRNAs (23S and 16S). Processes some mRNAs, and tRNAs when they are encoded in the rRNA operon. Processes pre-crRNA and tracrRNA of type II CRISPR loci if present in the organism. The chain is Ribonuclease 3 from Staphylococcus aureus (strain USA300).